The primary structure comprises 269 residues: Glucosyl-3-phosphoglycerate/mannosyl-3-phosphoglycerate phosphatase (269 aa).

Asp-6 (nucleophile) is an active-site residue. 3 residues coordinate Mg(2+): Asp-6, Asp-8, and Asp-210.

The protein belongs to the HAD-like hydrolase superfamily. MPGP family. As to quaternary structure, monomer. The cofactor is Co(2+). It depends on Mg(2+) as a cofactor.

It carries out the reaction (2R)-2-O-(alpha-D-glucopyranosyl)-3-phospho-glycerate + H2O = (2R)-2-O-(alpha-D-glucopyranosyl)-glycerate + phosphate. It catalyses the reaction 2-O-(alpha-D-mannosyl)-3-phosphoglycerate + H2O = (2R)-2-O-(alpha-D-mannosyl)-glycerate + phosphate. Its function is as follows. Involved in the biosynthesis of glucosylglycerate. Catalyzes the dephosphorylation of glucosyl-3-phosphoglycerate (GPG) and mannosyl-3-phosphoglycerate (MPG) to glucosylglycerate (GG) and mannosylglycerate (MG), respectively. The protein is Glucosyl-3-phosphoglycerate/mannosyl-3-phosphoglycerate phosphatase of Persephonella marina (strain DSM 14350 / EX-H1).